A 517-amino-acid polypeptide reads, in one-letter code: Xyloglucan galactosyltransferase XLT2 (517 aa).

The interval 1–31 (MLPVSNPSSPEHLLKKSRTPDSTTSIDRKNS) is disordered. The Cytoplasmic portion of the chain corresponds to 1–49 (MLPVSNPSSPEHLLKKSRTPDSTTSIDRKNSFNSLHSVGNRSSYIAASR). Over residues 20–31 (PDSTTSIDRKNS) the composition is skewed to polar residues. A helical; Signal-anchor for type II membrane protein transmembrane segment spans residues 50–70 (SHCTWLILSLLSLQLILFLTL). Over 71–517 (RSIPFPHRHI…KEQEKWYKWR (447 aa)) the chain is Lumenal. N-linked (GlcNAc...) asparagine glycans are attached at residues asparagine 250, asparagine 288, asparagine 377, and asparagine 449.

Belongs to the glycosyltransferase 47 family. In terms of assembly, interacts with CSLC4, FUT1, XXT2 and XXT5. As to expression, expressed in roots, hypocotyls, cotyledons, leaves, stems and flowers.

The protein localises to the golgi apparatus membrane. Its function is as follows. Functions in xyloglucan synthesis by adding side chains to the xylosylated glucan backbone. Involved in galactosylating hemicellulose xyloglucan (XyG) at the second position of the XXXG motif to form XLXG. Associates with other xyloglucan-synthesizing enzymes to form multiprotein complexes for xyloglucan synthesis in the Golgi. The chain is Xyloglucan galactosyltransferase XLT2 from Arabidopsis thaliana (Mouse-ear cress).